A 493-amino-acid polypeptide reads, in one-letter code: Growth-regulating factor 8 (493 aa).

Positions 149-184 constitute a QLQ domain; that stretch reads AFSEAQWHELERQRNIYKYMMASVPVPPELLTPFPK. Residues 243-287 enclose the WRC domain; the sequence is DLEPWRCKRTDGKKWRCSRNVIPDQKYCERHTHKSRPRSRKHVES. Short sequence motifs (bipartite nuclear localization signal) lie at residues 248–258 and 276–283; these read RCKRTDGKKWR and KSRPRSRK. Residues 270-302 form a disordered region; sequence CERHTHKSRPRSRKHVESSHQSSHHNDIRTAKN. The segment covering 273–283 has biased composition (basic residues); that stretch reads HTHKSRPRSRK.

The protein belongs to the GRF family. Predominantly expressed in shoot tips and flowers.

The protein localises to the nucleus. Its function is as follows. Transcription activator that plays a role in the regulation of cell expansion in leaf and cotyledons tissues. Component of a network formed by miR396, the GRFs and their interacting factors (GIFs) acting in the regulation of meristem function, at least partially through the control of cell proliferation. This is Growth-regulating factor 8 (GRF8) from Arabidopsis thaliana (Mouse-ear cress).